A 1356-amino-acid polypeptide reads, in one-letter code: Collagen alpha-2(I) chain (1356 aa).

The first 22 residues, M1–C22, serve as a signal peptide directing secretion. Residues C22 to R1112 are disordered. Residues Q23 and Q73 each carry the pyrrolidone carboxylic acid modification. Residues Q23–A72 constitute a propeptide, N-terminal propeptide. Over residues G76–G88 the composition is skewed to gly residues. Allysine is present on K78. K171 bears the 5-hydroxylysine; alternate mark. K171 carries an O-linked (Gal...) hydroxylysine; alternate glycan. The segment covering A219 to P248 has biased composition (low complexity). The segment covering G259–G280 has biased composition (gly residues). Low complexity predominate over residues I281–P315. A compositionally biased stretch (pro residues) spans F317 to Q327. Gly residues-rich tracts occupy residues G334 to G343, G391 to G412, G418 to G427, and G448 to G457. The segment covering P479–P489 has biased composition (low complexity). The segment covering G511–G520 has biased composition (gly residues). Composition is skewed to low complexity over residues N521–A564 and N587–R603. Gly residues-rich tracts occupy residues G610–G619 and G628–G646. A compositionally biased stretch (basic and acidic residues) spans K648–L659. Over residues L716–P731 the composition is skewed to low complexity. The segment covering G736 to G745 has biased composition (gly residues). Composition is skewed to low complexity over residues P746–P764 and P776–A786. The span at G787–G796 shows a compositional bias: gly residues. Positions I797–K809 are enriched in low complexity. The span at G817 to G826 shows a compositional bias: gly residues. Over residues E827 to Q858 the composition is skewed to low complexity. Positions G877–G886 are enriched in gly residues. A compositionally biased stretch (low complexity) spans P888 to A903. The span at G976 to G985 shows a compositional bias: gly residues. Residues R999–M1013 show a composition bias toward basic and acidic residues. Positions A1083–A1095 are enriched in pro residues. A propeptide spans D1114–K1356 (C-terminal propeptide). A Fibrillar collagen NC1 domain is found at Y1123–K1356. Intrachain disulfides connect C1153-C1185, C1193-C1354, and C1262-C1307. 5 residues coordinate Ca(2+): D1171, N1173, Q1174, C1176, and D1179. N1257 carries an N-linked (GlcNAc...) asparagine glycan.

Belongs to the fibrillar collagen family. Trimers of one alpha 2(I) and two alpha 1(I) chains. In terms of processing, prolines at the third position of the tripeptide repeating unit (G-X-Y) are hydroxylated in some or all of the chains. In terms of tissue distribution, forms the fibrils of tendon, ligaments and bones. In bones the fibrils are mineralized with calcium hydroxyapatite.

Its subcellular location is the secreted. It is found in the extracellular space. The protein resides in the extracellular matrix. Functionally, type I collagen is a member of group I collagen (fibrillar forming collagen). The chain is Collagen alpha-2(I) chain (col1a2) from Oncorhynchus mykiss (Rainbow trout).